The sequence spans 1396 residues: G2/mitotic-specific cyclin-B3 (1396 aa).

3 disordered regions span residues 1 to 64 (MPPP…TNAS), 259 to 398 (KEKP…PQME), and 477 to 500 (TTEK…PGEL). Basic and acidic residues predominate over residues 10-34 (SKLETEKAQSNKITPREEQQSEKIG). Residues 54–62 (RSVFEDVTN) carry the D-box motif. Positions 264–273 (VKKPHFRKKK) are enriched in basic residues. Residues 306–315 (LQENTNNKDA) show a composition bias toward polar residues. Serine 703 carries the phosphoserine modification. The segment at 775–796 (VDEPLSHQSPHIQNHSDTTKEA) is disordered. Residues 780 to 790 (SHQSPHIQNHS) show a composition bias toward polar residues.

It belongs to the cyclin family. Cyclin AB subfamily. Interacts with CDK2 kinase. Post-translationally, ubiquitinated. Ubiquitination leads to its degradation during anaphase entry, after degradation of CCNB1. Expressed in testis. Also expressed in the fetal ovary, but not in the adult.

The protein localises to the nucleus. Its function is as follows. Cyclins are positive regulatory subunits of the cyclin-dependent kinases (CDKs), and thereby play an essential role in the control of the cell cycle, notably via their destruction during cell division. Its tissue specificity suggest that it may be required during early meiotic prophase I. The protein is G2/mitotic-specific cyclin-B3 (Ccnb3) of Mus musculus (Mouse).